Here is a 389-residue protein sequence, read N- to C-terminus: Lipid-A-disaccharide synthase (389 aa).

The protein belongs to the LpxB family.

The catalysed reaction is a lipid X + a UDP-2-N,3-O-bis[(3R)-3-hydroxyacyl]-alpha-D-glucosamine = a lipid A disaccharide + UDP + H(+). The protein operates within bacterial outer membrane biogenesis; LPS lipid A biosynthesis. Its function is as follows. Condensation of UDP-2,3-diacylglucosamine and 2,3-diacylglucosamine-1-phosphate to form lipid A disaccharide, a precursor of lipid A, a phosphorylated glycolipid that anchors the lipopolysaccharide to the outer membrane of the cell. The sequence is that of Lipid-A-disaccharide synthase from Burkholderia lata (strain ATCC 17760 / DSM 23089 / LMG 22485 / NCIMB 9086 / R18194 / 383).